A 456-amino-acid chain; its full sequence is tRNA modification GTPase MnmE (456 aa).

(6S)-5-formyl-5,6,7,8-tetrahydrofolate contacts are provided by Arg24, Glu81, and Lys120. Positions Gly216–Gly379 constitute a TrmE-type G domain. K(+) is bound at residue Asn226. GTP is bound by residues Asn226–Ser231, Thr245–Thr251, Asp270–Gly273, and Asn335–Asp338. Ser230 contacts Mg(2+). Thr245, Ile247, and Thr250 together coordinate K(+). Thr251 contacts Mg(2+). Residue Lys456 coordinates (6S)-5-formyl-5,6,7,8-tetrahydrofolate.

This sequence belongs to the TRAFAC class TrmE-Era-EngA-EngB-Septin-like GTPase superfamily. TrmE GTPase family. Homodimer. Heterotetramer of two MnmE and two MnmG subunits. Requires K(+) as cofactor.

Its subcellular location is the cytoplasm. Its function is as follows. Exhibits a very high intrinsic GTPase hydrolysis rate. Involved in the addition of a carboxymethylaminomethyl (cmnm) group at the wobble position (U34) of certain tRNAs, forming tRNA-cmnm(5)s(2)U34. The sequence is that of tRNA modification GTPase MnmE from Pseudomonas putida (strain GB-1).